The chain runs to 458 residues: ATP synthase subunit beta (458 aa).

Position 148-155 (148-155) interacts with ATP; that stretch reads GGAGVGKT.

This sequence belongs to the ATPase alpha/beta chains family. F-type ATPases have 2 components, CF(1) - the catalytic core - and CF(0) - the membrane proton channel. CF(1) has five subunits: alpha(3), beta(3), gamma(1), delta(1), epsilon(1). CF(0) has three main subunits: a(1), b(2) and c(9-12). The alpha and beta chains form an alternating ring which encloses part of the gamma chain. CF(1) is attached to CF(0) by a central stalk formed by the gamma and epsilon chains, while a peripheral stalk is formed by the delta and b chains.

The protein resides in the cell inner membrane. The enzyme catalyses ATP + H2O + 4 H(+)(in) = ADP + phosphate + 5 H(+)(out). Its function is as follows. Produces ATP from ADP in the presence of a proton gradient across the membrane. The catalytic sites are hosted primarily by the beta subunits. In Francisella philomiragia subsp. philomiragia (strain ATCC 25017 / CCUG 19701 / FSC 153 / O#319-036), this protein is ATP synthase subunit beta.